Here is a 498-residue protein sequence, read N- to C-terminus: MSTSKSENYLSELRKIIWPIEQYENKKFLPLAFMMFCILLNYSTLRSIKDGFVVTDIGTESISFLKTYIVLPSAVIAMIIYVKLCDILKQENVFYVITSFFLGYFALFAFVLYPYPDLVHPDHKTIESLSLAYPNFKWFIKIVGKWSFASFYTIAELWGTMMLSLLFWQFANQITKIAEAKRFYSMFGLLANLALPVTSVVIGYFLHEKTQIVAEHLKFVPLFVIMITSSFLIILTYRWMNKNVLTDPRLYDPALVKEKKTKAKLSFIESLKMIFTSKYVGYIALLIIAYGVSVNLVEGVWKSKVKELYPTKEAYTIYMGQFQFYQGWVAIAFMLIGSNILRKVSWLTAAMITPLMMFITGAAFFSFIFFDSVIAMNLTGILASSPLTLAVMIGMIQNVLSKGVKYSLFDATKNMAYIPLDKDLRVKGQAAVEVIGGRLGKSGGAIIQSTFFILFPVFGFIEATPYFASIFFIIVILWIFAVKGLNKEYQVLVNKNEK.

Over M1–F33 the chain is Cytoplasmic. The chain crosses the membrane as a helical span at residues M34–V54. Cysteines 37 and 85 form a disulfide. The Extracellular segment spans residues T55–T67. Residues Y68–L88 form a helical membrane-spanning segment. Residues K89–N92 lie on the Cytoplasmic side of the membrane. The helical transmembrane segment at V93–Y113 threads the bilayer. Topologically, residues P114 to S147 are extracellular. The chain crosses the membrane as a helical span at residues F148 to W168. The Cytoplasmic segment spans residues Q169 to Y184. Residues S185–F205 form a helical membrane-spanning segment. Residues L206–K218 are Extracellular-facing. A helical transmembrane segment spans residues F219 to W239. The Cytoplasmic segment spans residues M240–Y279. A helical membrane pass occupies residues V280–V300. The Extracellular portion of the chain corresponds to W301–G320. Residues Q321–L341 form a helical membrane-spanning segment. The Cytoplasmic portion of the chain corresponds to R342 to T348. The helical transmembrane segment at A349 to F369 threads the bilayer. Residues F370–T379 are Extracellular-facing. The helical transmembrane segment at G380–L400 threads the bilayer. Residues S401–R438 are Cytoplasmic-facing. Residue G436–S442 coordinates ATP. The chain crosses the membrane as a helical span at residues L439–G459. Residues F460 to P465 are Extracellular-facing. Residues Y466–N486 form a helical membrane-spanning segment. Over K487–K498 the chain is Cytoplasmic.

It belongs to the ADP/ATP translocase tlc family.

The protein localises to the cell membrane. Functionally, provides the rickettsial cell with host ATP in exchange for rickettsial ADP. This is an obligate exchange system. This energy acquiring activity is an important component of rickettsial parasitism. The protein is ADP,ATP carrier protein 1 (tlcA) of Rickettsia prowazekii (strain Madrid E).